The primary structure comprises 278 residues: Sulfur carrier protein FdhD (278 aa).

Catalysis depends on C120, which acts as the Cysteine persulfide intermediate.

The protein belongs to the FdhD family.

The protein localises to the cytoplasm. Required for formate dehydrogenase (FDH) activity. Acts as a sulfur carrier protein that transfers sulfur from IscS to the molybdenum cofactor prior to its insertion into FDH. The chain is Sulfur carrier protein FdhD from Bordetella petrii (strain ATCC BAA-461 / DSM 12804 / CCUG 43448).